We begin with the raw amino-acid sequence, 1290 residues long: DNA-directed RNA polymerase subunit beta' (1290 aa).

Zn(2+)-binding residues include Cys68, Cys70, Cys83, and Cys86. Mg(2+) is bound by residues Asp530, Asp532, and Asp534. Positions 909, 985, 992, and 995 each coordinate Zn(2+).

Belongs to the RNA polymerase beta' chain family. As to quaternary structure, the RNAP catalytic core consists of 2 alpha, 1 beta, 1 beta' and 1 omega subunit. When a sigma factor is associated with the core the holoenzyme is formed, which can initiate transcription. It depends on Mg(2+) as a cofactor. Requires Zn(2+) as cofactor.

It catalyses the reaction RNA(n) + a ribonucleoside 5'-triphosphate = RNA(n+1) + diphosphate. Its function is as follows. DNA-dependent RNA polymerase catalyzes the transcription of DNA into RNA using the four ribonucleoside triphosphates as substrates. The polypeptide is DNA-directed RNA polymerase subunit beta' (Mycoplasma pneumoniae (strain ATCC 29342 / M129 / Subtype 1) (Mycoplasmoides pneumoniae)).